Consider the following 356-residue polypeptide: D-alanine--D-alanine ligase (356 aa).

The region spanning Lys-134–Glu-339 is the ATP-grasp domain. His-167–Glu-222 is an ATP binding site. Mg(2+) is bound by residues Asp-293, Glu-306, and Asn-308.

It belongs to the D-alanine--D-alanine ligase family. The cofactor is Mg(2+). Mn(2+) serves as cofactor.

The protein resides in the cytoplasm. It catalyses the reaction 2 D-alanine + ATP = D-alanyl-D-alanine + ADP + phosphate + H(+). It functions in the pathway cell wall biogenesis; peptidoglycan biosynthesis. Functionally, cell wall formation. In Staphylococcus saprophyticus subsp. saprophyticus (strain ATCC 15305 / DSM 20229 / NCIMB 8711 / NCTC 7292 / S-41), this protein is D-alanine--D-alanine ligase.